A 265-amino-acid polypeptide reads, in one-letter code: Serine protease ami (265 aa).

Residues 1–21 (MNVSWALLAVVLVLTVATYEC) form the signal peptide. N-linked (GlcNAc...) asparagine glycosylation occurs at asparagine 2. Residues 22 to 26 (RPRGR) constitute a propeptide, activation peptide. The 228-residue stretch at 27 to 254 (ILGGQDSKAE…YKSWIMESMY (228 aa)) folds into the Peptidase S1 domain. A disulfide bond links cysteine 52 and cysteine 68. The active-site Charge relay system is histidine 67. 3 N-linked (GlcNAc...) asparagine glycosylation sites follow: asparagine 71, asparagine 74, and asparagine 108. Residue aspartate 115 is the Charge relay system of the active site. 3 disulfides stabilise this stretch: cysteine 149–cysteine 215, cysteine 180–cysteine 196, and cysteine 205–cysteine 230. Catalysis depends on serine 209, which acts as the Charge relay system. N-linked (GlcNAc...) asparagine glycosylation occurs at asparagine 255.

Belongs to the peptidase S1 family.

It localises to the secreted. Functionally, probable serine protease. In Xenopus tropicalis (Western clawed frog), this protein is Serine protease ami.